Reading from the N-terminus, the 675-residue chain is UvrABC system protein B (675 aa).

A Helicase ATP-binding domain is found at 35 to 422 (EGVSDGLMFQ…ADNVVEQVVR (388 aa)). Residue 48–55 (GVTGSGKT) coordinates ATP. The Beta-hairpin motif lies at 101-124 (YYDYYQPEAYVPTRDLFIEKDSSI). Positions 439–605 (QVDDLLGEIH…GVSKAVRELI (167 aa)) constitute a Helicase C-terminal domain. The UVR domain maps to 633–668 (AREIRRLEKLMMDHARNLEFEQAAAARDALNALKSR).

The protein belongs to the UvrB family. As to quaternary structure, forms a heterotetramer with UvrA during the search for lesions. Interacts with UvrC in an incision complex.

It is found in the cytoplasm. In terms of biological role, the UvrABC repair system catalyzes the recognition and processing of DNA lesions. A damage recognition complex composed of 2 UvrA and 2 UvrB subunits scans DNA for abnormalities. Upon binding of the UvrA(2)B(2) complex to a putative damaged site, the DNA wraps around one UvrB monomer. DNA wrap is dependent on ATP binding by UvrB and probably causes local melting of the DNA helix, facilitating insertion of UvrB beta-hairpin between the DNA strands. Then UvrB probes one DNA strand for the presence of a lesion. If a lesion is found the UvrA subunits dissociate and the UvrB-DNA preincision complex is formed. This complex is subsequently bound by UvrC and the second UvrB is released. If no lesion is found, the DNA wraps around the other UvrB subunit that will check the other stand for damage. This is UvrABC system protein B from Bordetella bronchiseptica (strain ATCC BAA-588 / NCTC 13252 / RB50) (Alcaligenes bronchisepticus).